Here is a 374-residue protein sequence, read N- to C-terminus: Magnesium-chelatase subunit ChlI (374 aa).

Residue 47 to 54 coordinates ATP; sequence GDRGTGKS.

The protein belongs to the Mg-chelatase subunits D/I family.

The catalysed reaction is protoporphyrin IX + Mg(2+) + ATP + H2O = Mg-protoporphyrin IX + ADP + phosphate + 3 H(+). It participates in porphyrin-containing compound metabolism; chlorophyll biosynthesis. Its function is as follows. Involved in chlorophyll biosynthesis; introduces a magnesium ion into protoporphyrin IX to yield Mg-protoporphyrin IX. This is Magnesium-chelatase subunit ChlI (chlI) from Nostoc sp. (strain PCC 7120 / SAG 25.82 / UTEX 2576).